A 69-amino-acid chain; its full sequence is M-poneratoxin-Dq4e (69 aa).

Positions 1–25 are cleaved as a signal peptide; the sequence is MKLSAFTLAFALILMMAIMYNMAEA. A propeptide spanning residues 26–39 is cleaved from the precursor; it reads AALADADADAEAIA.

As to expression, expressed by the venom gland.

It is found in the secreted. Functionally, may have antimicrobial properties, like most ant linear peptides. In addition, when tested in vitro on the parasite Trypanosoma cruzi (responsible of the Chagas disease), is able to moderately reduce the number of the three forms (epimastigote, trypomastigote and amastigote) by inducing cell death through necrosis. The polypeptide is M-poneratoxin-Dq4e (Dinoponera quadriceps (South American ant)).